We begin with the raw amino-acid sequence, 209 residues long: Holliday junction branch migration complex subunit RuvA (209 aa).

The tract at residues 1–70 (MINYLKGKTT…EDQQILYGFS (70 aa)) is domain I. The domain II stretch occupies residues 71 to 149 (TDSERDLFRQ…QWEQAIALKT (79 aa)). Positions 150-160 (PVSVGVPSREI) are flexible linker. The domain III stretch occupies residues 160 to 209 (ILEEVEMTLLALGYTDEEIDQAISAISQDNLLLKNPHVEEWLKSAIAWLS).

Belongs to the RuvA family. In terms of assembly, homotetramer. Forms an RuvA(8)-RuvB(12)-Holliday junction (HJ) complex. HJ DNA is sandwiched between 2 RuvA tetramers; dsDNA enters through RuvA and exits via RuvB. An RuvB hexamer assembles on each DNA strand where it exits the tetramer. Each RuvB hexamer is contacted by two RuvA subunits (via domain III) on 2 adjacent RuvB subunits; this complex drives branch migration. In the full resolvosome a probable DNA-RuvA(4)-RuvB(12)-RuvC(2) complex forms which resolves the HJ.

It is found in the cytoplasm. Its function is as follows. The RuvA-RuvB-RuvC complex processes Holliday junction (HJ) DNA during genetic recombination and DNA repair, while the RuvA-RuvB complex plays an important role in the rescue of blocked DNA replication forks via replication fork reversal (RFR). RuvA specifically binds to HJ cruciform DNA, conferring on it an open structure. The RuvB hexamer acts as an ATP-dependent pump, pulling dsDNA into and through the RuvAB complex. HJ branch migration allows RuvC to scan DNA until it finds its consensus sequence, where it cleaves and resolves the cruciform DNA. This chain is Holliday junction branch migration complex subunit RuvA, found in Gloeothece citriformis (strain PCC 7424) (Cyanothece sp. (strain PCC 7424)).